The sequence spans 501 residues: ATP synthase subunit alpha (501 aa).

Position 169–176 (169–176) interacts with ATP; the sequence is GDRQTGKT.

The protein belongs to the ATPase alpha/beta chains family. F-type ATPases have 2 components, CF(1) - the catalytic core - and CF(0) - the membrane proton channel. CF(1) has five subunits: alpha(3), beta(3), gamma(1), delta(1), epsilon(1). CF(0) has three main subunits: a(1), b(2) and c(9-12). The alpha and beta chains form an alternating ring which encloses part of the gamma chain. CF(1) is attached to CF(0) by a central stalk formed by the gamma and epsilon chains, while a peripheral stalk is formed by the delta and b chains.

It localises to the cell membrane. It carries out the reaction ATP + H2O + 4 H(+)(in) = ADP + phosphate + 5 H(+)(out). Functionally, produces ATP from ADP in the presence of a proton gradient across the membrane. The alpha chain is a regulatory subunit. This is ATP synthase subunit alpha from Streptococcus gordonii (strain Challis / ATCC 35105 / BCRC 15272 / CH1 / DL1 / V288).